A 128-amino-acid chain; its full sequence is UPF0212 protein TGAM_1344 (128 aa).

The protein belongs to the UPF0212 family.

In Thermococcus gammatolerans (strain DSM 15229 / JCM 11827 / EJ3), this protein is UPF0212 protein TGAM_1344.